We begin with the raw amino-acid sequence, 364 residues long: tRNA 2-selenouridine synthase (364 aa).

A Rhodanese domain is found at 14 to 136 (VLNNTPLIDV…AFRNWLMQET (123 aa)). Catalysis depends on C97, which acts as the S-selanylcysteine intermediate.

Belongs to the SelU family. Monomer.

It carries out the reaction 5-methylaminomethyl-2-thiouridine(34) in tRNA + selenophosphate + (2E)-geranyl diphosphate + H2O + H(+) = 5-methylaminomethyl-2-selenouridine(34) in tRNA + (2E)-thiogeraniol + phosphate + diphosphate. The catalysed reaction is 5-methylaminomethyl-2-thiouridine(34) in tRNA + (2E)-geranyl diphosphate = 5-methylaminomethyl-S-(2E)-geranyl-thiouridine(34) in tRNA + diphosphate. The enzyme catalyses 5-methylaminomethyl-S-(2E)-geranyl-thiouridine(34) in tRNA + selenophosphate + H(+) = 5-methylaminomethyl-2-(Se-phospho)selenouridine(34) in tRNA + (2E)-thiogeraniol. It catalyses the reaction 5-methylaminomethyl-2-(Se-phospho)selenouridine(34) in tRNA + H2O = 5-methylaminomethyl-2-selenouridine(34) in tRNA + phosphate. Involved in the post-transcriptional modification of the uridine at the wobble position (U34) of tRNA(Lys), tRNA(Glu) and tRNA(Gln). Catalyzes the conversion of 2-thiouridine (S2U-RNA) to 2-selenouridine (Se2U-RNA). Acts in a two-step process involving geranylation of 2-thiouridine (S2U) to S-geranyl-2-thiouridine (geS2U) and subsequent selenation of the latter derivative to 2-selenouridine (Se2U) in the tRNA chain. In Sulfurovum sp. (strain NBC37-1), this protein is tRNA 2-selenouridine synthase.